The chain runs to 394 residues: Phosphoglycerate kinase (394 aa).

Residues 21-23 (DFN), Arg-36, 59-62 (HLGR), Arg-118, and Arg-151 each bind substrate. Ser-183 carries the post-translational modification Phosphoserine. ATP contacts are provided by Lys-201 and Gly-292. Residue Thr-299 is modified to Phosphothreonine. ATP-binding positions include Glu-323 and 350–353 (GGDS).

Belongs to the phosphoglycerate kinase family. In terms of assembly, monomer.

The protein localises to the cytoplasm. The enzyme catalyses (2R)-3-phosphoglycerate + ATP = (2R)-3-phospho-glyceroyl phosphate + ADP. It participates in carbohydrate degradation; glycolysis; pyruvate from D-glyceraldehyde 3-phosphate: step 2/5. The protein is Phosphoglycerate kinase of Bacillus cereus (strain G9842).